A 340-amino-acid chain; its full sequence is Ras association domain-containing protein 1 (340 aa).

An N-acetylserine modification is found at serine 2. Serine 2 carries the post-translational modification Phosphoserine. A mediates interaction with E4F1 region spans residues 2-115 (SAEPELIELR…DLGWDSALER (114 aa)). The segment at 51–101 (GHRFQPAGPTTHTWCDLCGDFIWGVVRKGLQCAHCKFTCHYRCRALVCLDC) adopts a Phorbol-ester/DAG-type zinc-finger fold. Residues 175 to 185 (SVPSSKKPPSL) are compositionally biased toward low complexity. Residues 175–196 (SVPSSKKPPSLQDARRGTGRST) form a disordered region. One can recognise a Ras-associating domain in the interval 194 to 288 (RSTAVKRRTS…LSFVLKENDS (95 aa)). Residues 290 to 337 (EVNWDAFSMPELHNFLRILQREEEEHLRQILQKYSRCRQKIQEALHAC) form the SARAH domain. An MOAP1-binding region spans residues 311 to 314 (EEEE).

In terms of assembly, interacts with MAP1S and XPA. Binds to the N-terminal of CDC20 during prometaphase. Binds to STK3/MST2 and STK4/MST1. Recruited to the TNFRSF1A and TNFRSF10A complexes in response to their respective cognate ligand, after internalization. Can self-associate. Part of a complex with MDM2, DAXX, RASSF1 and USP7. Interacts with MOAP1 and E4F1. Interacts with RSSF5 and probably associates with HRAS via a RSSF1 isoform A-RSSF5 heterodimer. Interacts (via C-terminus) with DAXX (via N-terminus); the interaction is independent of MDM2 and TP53. Interacts (via N-terminus) with MDM2 (via C-terminus); the interaction is independent of TP53. Interacts with RAB39A. Interacts with RAB39B; the interaction is weak. As to quaternary structure, interacts with ECM2. Interacts with RAB39B; the interaction is strong. Does not interact with RAB39A.

Its subcellular location is the cytoplasm. The protein localises to the cytoskeleton. It is found in the microtubule organizing center. The protein resides in the centrosome. It localises to the spindle. Its subcellular location is the spindle pole. The protein localises to the nucleus. Functionally, potential tumor suppressor. Required for death receptor-dependent apoptosis. Mediates activation of Mediates activation of STK3/MST2 and STK4/MST1 during Fas-induced apoptosis by preventing their dephosphorylation. When associated with MOAP1, promotes BAX conformational change and translocation to mitochondrial membranes in response to TNF and TNFSF10 stimulation. Isoform A interacts with CDC20, an activator of the anaphase-promoting complex, APC, resulting in the inhibition of APC activity and mitotic progression. Inhibits proliferation by negatively regulating cell cycle progression at the level of G1/S-phase transition by regulating accumulation of cyclin D1 protein. Isoform C has been shown not to perform these roles, no function has been identified for this isoform. Isoform A disrupts interactions among MDM2, DAXX and USP7, thus contributing to the efficient activation of TP53 by promoting MDM2 self-ubiquitination in cell-cycle checkpoint control in response to DNA damage. The polypeptide is Ras association domain-containing protein 1 (Mus musculus (Mouse)).